We begin with the raw amino-acid sequence, 69 residues long: Conopeptide Y-Pl1 (69 aa).

The signal sequence occupies residues 1 to 20 (MSKLGVVLFVFLLLLPLAAP). A propeptide spanning residues 21-69 (QPVGDQPADQPADRNAEARARFLHPFQYYTLYRYLTRFLHRYPIYYIRY) is cleaved from the precursor.

The protein belongs to the conotoxin M superfamily. Conopeptide Y family. As to expression, expressed by the venom duct.

The protein resides in the secreted. Tyrosine-rich conopeptide that targets several channels/receptors that are expressed in Xenopus oocytes. These targets are the voltage-gated potassium channels Kv1.6/KCNA6 (IC(50) is 170 nM) and Kv1.2/KCNA2 (IC(50) is 2.0 uM), Nav1.2/SCN2A (30% of inhibition), and N-methyl-D-aspartate (NMDA) receptor (GRIN1/GRIN2A/GRIN3B and GRIN1/GRIN2B/GRIN3B) (15% of inhibition). In vivo, causes the marine worm N.virens to move very slowly in contrast to control worms, and causes seizures (at 5 nmol) and death (20 nmol) to mice when intracranially injected. The sequence is that of Conopeptide Y-Pl1 from Conus planorbis (Planorbis cone).